Consider the following 751-residue polypeptide: MSNESKCPFHQTAGGGTTNRDWWPDQLNLRILHQHSSKSSPDPDFDYAKAFKSLDFQALKKDLTALMTDSQDWWPADFGHYGPLFIRMAWHSAGTYRIGDGRGGAGSGQQRFAPLNSWPDNVSLDKARRLLWPIKQKYGNKISWADLIVLTGNVALESMGFKTFGFSGGRADVWEPDEDVYWGSEKVWLGGDTRYGKDQVKAQPPGQGDLVAEPAKHGEEQNRDLSAERNLENPLAAVQMGLIYVNPEGPEGNPDPVASGKDIRETFGRMAMNDEETVALIAGGHAFGKTHGAGPADNVGPEPEAAGLEMQGLGWHNTFGSGKGGDTITSGLEVTWTSTPTRWSNEYLNNLFDFEWELTKSPAGAHQWRPKEGKGAGTVPDAHDPGKKHAPSMLTSDLALRFDPIYAPIARRFKDNPEQLADAFARAWYKLIHRDMGPLARYLGPEMPNEELLWQDPLPKADPSTISEQDIATLKSRILASGLSVGELVSTAWASASTFRGSDKRGGANGARLRLAPQKDWAANQGVDKVLAALEKIRGEFNNGGKKVSLADLIVLAGTAAVEKAAKDAGYSGSVGFRPGRVDASQEQTDVESFAVLEPLADGFRNFTKARYSVKAEKLLLDKAQLLTLTAPELTVLIGGLRVLGANHGGSNLGVFTDKPGTLSNDFFRNLLDMSVEWKPTSADNETFEGRDRKTGQVKWSGSRVDLVFGSHAQLRALSEVYGSSDGGDKFVRDFVAAWQKVMELDRFDLK.

Residues 1-21 (MSNESKCPFHQTAGGGTTNRD) form a disordered region. A cross-link (tryptophyl-tyrosyl-methioninium (Trp-Tyr) (with M-270)) is located at residues 90–244 (WHSAGTYRIG…LAAVQMGLIY (155 aa)). Histidine 91 functions as the Proton acceptor in the catalytic mechanism. The tract at residues 195 to 227 (YGKDQVKAQPPGQGDLVAEPAKHGEEQNRDLSA) is disordered. Basic and acidic residues predominate over residues 214 to 227 (PAKHGEEQNRDLSA). A cross-link (tryptophyl-tyrosyl-methioninium (Tyr-Met) (with W-90)) is located at residues 244–270 (YVNPEGPEGNPDPVASGKDIRETFGRM). Residue histidine 285 coordinates heme b. The interval 365–387 (AHQWRPKEGKGAGTVPDAHDPGK) is disordered.

It belongs to the peroxidase family. Peroxidase/catalase subfamily. In terms of assembly, homodimer or homotetramer. Requires heme b as cofactor. In terms of processing, formation of the three residue Trp-Tyr-Met cross-link is important for the catalase, but not the peroxidase activity of the enzyme.

The enzyme catalyses H2O2 + AH2 = A + 2 H2O. It catalyses the reaction 2 H2O2 = O2 + 2 H2O. Its function is as follows. Bifunctional enzyme with both catalase and broad-spectrum peroxidase activity. The chain is Catalase-peroxidase from Pseudomonas putida (strain ATCC 700007 / DSM 6899 / JCM 31910 / BCRC 17059 / LMG 24140 / F1).